We begin with the raw amino-acid sequence, 285 residues long: Probable endonuclease 4 (285 aa).

Zn(2+) is bound by residues His-69, His-109, Glu-145, Asp-179, His-182, His-216, Asp-229, His-231, and Glu-261.

Belongs to the AP endonuclease 2 family. Requires Zn(2+) as cofactor.

It catalyses the reaction Endonucleolytic cleavage to 5'-phosphooligonucleotide end-products.. Endonuclease IV plays a role in DNA repair. It cleaves phosphodiester bonds at apurinic or apyrimidinic (AP) sites, generating a 3'-hydroxyl group and a 5'-terminal sugar phosphate. In Salmonella heidelberg (strain SL476), this protein is Probable endonuclease 4.